Here is a 292-residue protein sequence, read N- to C-terminus: Pyridoxal 5'-phosphate synthase subunit PdxS (292 aa).

Asp-22 contacts D-ribose 5-phosphate. Lys-79 (schiff-base intermediate with D-ribose 5-phosphate) is an active-site residue. Position 151 (Gly-151) interacts with D-ribose 5-phosphate. Arg-163 contacts D-glyceraldehyde 3-phosphate. D-ribose 5-phosphate contacts are provided by residues Gly-212 and 233–234 (GS).

It belongs to the PdxS/SNZ family. In terms of assembly, in the presence of PdxT, forms a dodecamer of heterodimers.

It carries out the reaction aldehydo-D-ribose 5-phosphate + D-glyceraldehyde 3-phosphate + L-glutamine = pyridoxal 5'-phosphate + L-glutamate + phosphate + 3 H2O + H(+). It functions in the pathway cofactor biosynthesis; pyridoxal 5'-phosphate biosynthesis. Its function is as follows. Catalyzes the formation of pyridoxal 5'-phosphate from ribose 5-phosphate (RBP), glyceraldehyde 3-phosphate (G3P) and ammonia. The ammonia is provided by the PdxT subunit. Can also use ribulose 5-phosphate and dihydroxyacetone phosphate as substrates, resulting from enzyme-catalyzed isomerization of RBP and G3P, respectively. The polypeptide is Pyridoxal 5'-phosphate synthase subunit PdxS (Caldanaerobacter subterraneus subsp. tengcongensis (strain DSM 15242 / JCM 11007 / NBRC 100824 / MB4) (Thermoanaerobacter tengcongensis)).